Here is an 807-residue protein sequence, read N- to C-terminus: Glycerol-3-phosphate acyltransferase (807 aa).

The HXXXXD motif signature appears at 306–311 (HRSHMD).

The protein belongs to the GPAT/DAPAT family.

The protein resides in the cell inner membrane. It carries out the reaction sn-glycerol 3-phosphate + an acyl-CoA = a 1-acyl-sn-glycero-3-phosphate + CoA. It functions in the pathway phospholipid metabolism; CDP-diacylglycerol biosynthesis; CDP-diacylglycerol from sn-glycerol 3-phosphate: step 1/3. The chain is Glycerol-3-phosphate acyltransferase (plsB) from Escherichia coli O157:H7.